We begin with the raw amino-acid sequence, 210 residues long: MSAAKPKTAKKARAAPAHPPTSQMVVAAITALKERGGSSNQAIKKYIAANYKVDINKQATFIKRALKAGVANGTLVQVKGKGASGSFKLGKVKAGKTEAQKARAAAKKAKLAAKKKEQKEKKAAKTKARKEKLAAKKAAKKAAKKVKKPAAKAKKPAKKAAKKPAAKKAAKKPAAKKPAKKAAKKPAAKKAAKPAKKAAKKPAAKKAAKK.

Disordered stretches follow at residues 1-21 (MSAAKPKTAKKARAAPAHPPT) and 86-210 (SFKL…AAKK). In terms of domain architecture, H15 spans 17–91 (AHPPTSQMVV…GASGSFKLGK (75 aa)). Over residues 104–113 (AAAKKAKLAA) the composition is skewed to basic residues. The segment covering 114–123 (KKKEQKEKKA) has biased composition (basic and acidic residues). Over residues 124–210 (AKTKARKEKL…KPAAKKAAKK (87 aa)) the composition is skewed to basic residues.

It belongs to the histone H1/H5 family.

The protein localises to the nucleus. It is found in the chromosome. In terms of biological role, histones H1 are necessary for the condensation of nucleosome chains into higher-order structures. This is Late histone H1 from Lytechinus pictus (Painted sea urchin).